A 458-amino-acid polypeptide reads, in one-letter code: Alpha-1,3/1,6-mannosyltransferase ALG2 (458 aa).

Asn57 and Asn169 each carry an N-linked (GlcNAc...) asparagine glycan. A helical transmembrane segment spans residues 438–458; the sequence is NISIIYVVSIIFAVLLKVFVF.

This sequence belongs to the glycosyltransferase group 1 family.

It is found in the endoplasmic reticulum membrane. The catalysed reaction is a beta-D-Man-(1-&gt;4)-beta-D-GlcNAc-(1-&gt;4)-alpha-D-GlcNAc-diphospho-di-trans,poly-cis-dolichol + GDP-alpha-D-mannose = an alpha-D-Man-(1-&gt;3)-beta-D-Man-(1-&gt;4)-beta-D-GlcNAc-(1-&gt;4)-alpha-D-GlcNAc-diphospho-di-trans,poly-cis-dolichol + GDP + H(+). The enzyme catalyses an alpha-D-Man-(1-&gt;3)-beta-D-Man-(1-&gt;4)-beta-D-GlcNAc-(1-&gt;4)-alpha-D-GlcNAc-diphospho-di-trans,poly-cis-dolichol + GDP-alpha-D-mannose = an alpha-D-Man-(1-&gt;3)-[alpha-D-Man-(1-&gt;6)]-beta-D-Man-(1-&gt;4)-beta-D-GlcNAc-(1-&gt;4)-alpha-D-GlcNAc-diphospho-di-trans,poly-cis-dolichol + GDP + H(+). It functions in the pathway protein modification; protein glycosylation. In terms of biological role, mannosylates Man(2)GlcNAc(2)-dolichol diphosphate and Man(1)GlcNAc(2)-dolichol diphosphate to form Man(3)GlcNAc(2)-dolichol diphosphate. This chain is Alpha-1,3/1,6-mannosyltransferase ALG2 (ALG2), found in Candida glabrata (strain ATCC 2001 / BCRC 20586 / JCM 3761 / NBRC 0622 / NRRL Y-65 / CBS 138) (Yeast).